The primary structure comprises 291 residues: MMYSFIARNKINTFLILFVFILACGGFGLLAGRFLGMSFFLFILLLAAGYACVQYFFSGRLAVLMSGARKISRNDNPRLWNTVENLSITTGLPMPEVYIVDDPAPNAFATGRDPKHAKVAATSGLLEILDDSELEGVMAHEMGHVKNYDIRVSTIVFGLVSAVGLISDMVLRALIWGDNRREGNSAFSFVIVLFFSLLAPIAAMLVQLAVSREREYLADATGALTTRYPAALASALAKLEGNARPLQRQSSSMAHLWISNPMPRGFFRKLFSTHPPTEERIRRLKEMGNQF.

Helical transmembrane passes span 11 to 31 and 34 to 54; these read INTF…GLLA and FLGM…ACVQ. Histidine 140 contacts Zn(2+). Glutamate 141 is an active-site residue. Histidine 144 is a Zn(2+) binding site. The next 2 helical transmembrane spans lie at 155 to 175 and 186 to 206; these read IVFG…RALI and AFSF…AMLV. Position 215 (glutamate 215) interacts with Zn(2+).

The protein belongs to the peptidase M48B family. It depends on Zn(2+) as a cofactor.

The protein localises to the cell membrane. This chain is Protease HtpX homolog, found in Tropheryma whipplei (strain Twist) (Whipple's bacillus).